A 333-amino-acid polypeptide reads, in one-letter code: Ketol-acid reductoisomerase (NADP(+)) (333 aa).

One can recognise a KARI N-terminal Rossmann domain in the interval A2–T182. NADP(+) contacts are provided by residues Y25–Q28, S51, S53, and D83–Q86. H108 is a catalytic residue. G134 serves as a coordination point for NADP(+). The region spanning T183–S328 is the KARI C-terminal knotted domain. 4 residues coordinate Mg(2+): D191, E195, E227, and E231. S252 contributes to the substrate binding site.

The protein belongs to the ketol-acid reductoisomerase family. Requires Mg(2+) as cofactor.

The catalysed reaction is (2R)-2,3-dihydroxy-3-methylbutanoate + NADP(+) = (2S)-2-acetolactate + NADPH + H(+). It carries out the reaction (2R,3R)-2,3-dihydroxy-3-methylpentanoate + NADP(+) = (S)-2-ethyl-2-hydroxy-3-oxobutanoate + NADPH + H(+). The protein operates within amino-acid biosynthesis; L-isoleucine biosynthesis; L-isoleucine from 2-oxobutanoate: step 2/4. Its pathway is amino-acid biosynthesis; L-valine biosynthesis; L-valine from pyruvate: step 2/4. In terms of biological role, involved in the biosynthesis of branched-chain amino acids (BCAA). Catalyzes an alkyl-migration followed by a ketol-acid reduction of (S)-2-acetolactate (S2AL) to yield (R)-2,3-dihydroxy-isovalerate. In the isomerase reaction, S2AL is rearranged via a Mg-dependent methyl migration to produce 3-hydroxy-3-methyl-2-ketobutyrate (HMKB). In the reductase reaction, this 2-ketoacid undergoes a metal-dependent reduction by NADPH to yield (R)-2,3-dihydroxy-isovalerate. This Alkaliphilus metalliredigens (strain QYMF) protein is Ketol-acid reductoisomerase (NADP(+)).